The chain runs to 224 residues: Urease accessory protein UreF (224 aa).

Belongs to the UreF family. In terms of assembly, ureD, UreF and UreG form a complex that acts as a GTP-hydrolysis-dependent molecular chaperone, activating the urease apoprotein by helping to assemble the nickel containing metallocenter of UreC. The UreE protein probably delivers the nickel.

The protein resides in the cytoplasm. Its function is as follows. Required for maturation of urease via the functional incorporation of the urease nickel metallocenter. The polypeptide is Urease accessory protein UreF (Pseudomonas fluorescens (strain ATCC BAA-477 / NRRL B-23932 / Pf-5)).